Reading from the N-terminus, the 95-residue chain is Ferredoxin-like protein FixX (95 aa).

Belongs to the bacterial-type ferredoxin family. FixX subfamily.

Could be part of an electron transfer system required for anaerobic carnitine reduction. Could be a 3Fe-4S cluster-containing protein. The chain is Ferredoxin-like protein FixX (fixX) from Escherichia coli O157:H7.